Consider the following 603-residue polypeptide: Beta-hexosaminidase (603 aa).

The first 19 residues, 1-19 (MAYFRLYAVLLAVASSVAA), serve as a signal peptide directing secretion. Catalysis depends on charge relay system residues D225, H278, and E349. C293 and C354 form a disulfide bridge. A glycan (N-linked (GlcNAc...) asparagine) is linked at N356. Cysteines 451 and 486 form a disulfide. N-linked (GlcNAc...) asparagine glycosylation is found at N503 and N528. C586 and C593 are oxidised to a cystine.

The protein belongs to the glycosyl hydrolase 20 family. As to quaternary structure, homodimer.

It is found in the secreted. It carries out the reaction Hydrolysis of terminal non-reducing N-acetyl-D-hexosamine residues in N-acetyl-beta-D-hexosaminides.. In terms of biological role, part of the binary chitinolytic system. Involved in hydrolysis of chitobiose and higher chito-oligomers (produced from cell wall chitin by endochitinases), thus contributing to the formation of germ tubes, fruit-bodies and septa during hyphenation. Hydrolyzes synthetic substrates p-nitrophenyl-beta-N-acetyl-glucosamine (pNP-beta-GlcNAc), p-nitrophenyl-beta-N-acetyl-galactosamine (pNP-beta-GalNAc) and 5-bromo-4-chloro-3-indoyl-beta-D-N-glucosaminide (X-GlcNAc). This Emericella nidulans (Aspergillus nidulans) protein is Beta-hexosaminidase.